Reading from the N-terminus, the 234-residue chain is Hydrolase in agr operon (234 aa).

One can recognise a CN hydrolase domain in the interval 1-212; it reads ILYNKDTDVV…EKELTVTIDI (212 aa). Glu-14 (proton acceptor) is an active-site residue. Lys-83 serves as the catalytic Proton donor. Cys-119 (nucleophile) is an active-site residue.

This sequence belongs to the carbon-nitrogen hydrolase superfamily. NIT1/NIT2 family.

In Staphylococcus lugdunensis, this protein is Hydrolase in agr operon.